We begin with the raw amino-acid sequence, 373 residues long: Zinc finger protein CONSTANS-LIKE 10 (373 aa).

Residues Cys5, Cys8, Cys28, His33, Cys48, Cys51, Cys71, and His76 each coordinate Zn(2+). The segment at 5–47 adopts a B box-type 1; atypical zinc-finger fold; the sequence is CDFCGEQRSMVYCRSDAACLCLSCDRNVHSANALSKRHSRTLV. A B box-type 2; atypical zinc finger spans residues 48–92; sequence CERCNAQPASVRCSDERVSLCQNCDWSGHDGKNSTTTSHHKRQTI. The tract at residues 152-172 is disordered; the sequence is PETSSAAQGMDHSSVPENSSM. The CCT domain occupies 316-358; that stretch reads RNNAVMRYKEKKKARKFDKRVRYVSRKERADVRRRVKGRFVKS.

It belongs to the CONSTANS family.

It localises to the nucleus. In Arabidopsis thaliana (Mouse-ear cress), this protein is Zinc finger protein CONSTANS-LIKE 10 (COL10).